Consider the following 314-residue polypeptide: GTP cyclohydrolase FolE2 (314 aa).

The tract at residues 290 to 314 (DASAWSAPQASAPDQQESFATGNER) is disordered. A compositionally biased stretch (low complexity) spans 291 to 305 (ASAWSAPQASAPDQQ).

It belongs to the GTP cyclohydrolase IV family.

The enzyme catalyses GTP + H2O = 7,8-dihydroneopterin 3'-triphosphate + formate + H(+). The protein operates within cofactor biosynthesis; 7,8-dihydroneopterin triphosphate biosynthesis; 7,8-dihydroneopterin triphosphate from GTP: step 1/1. In terms of biological role, converts GTP to 7,8-dihydroneopterin triphosphate. The protein is GTP cyclohydrolase FolE2 of Pseudomonas putida (strain ATCC 700007 / DSM 6899 / JCM 31910 / BCRC 17059 / LMG 24140 / F1).